Here is a 339-residue protein sequence, read N- to C-terminus: Ribosomal RNA large subunit methyltransferase F (339 aa).

The disordered stretch occupies residues 1–26 (MTAPSTPKPQRKKPKTATTAKPVVPR).

The protein belongs to the methyltransferase superfamily. METTL16/RlmF family.

The protein resides in the cytoplasm. The catalysed reaction is adenosine(1618) in 23S rRNA + S-adenosyl-L-methionine = N(6)-methyladenosine(1618) in 23S rRNA + S-adenosyl-L-homocysteine + H(+). Specifically methylates the adenine in position 1618 of 23S rRNA. In Pseudomonas fluorescens (strain SBW25), this protein is Ribosomal RNA large subunit methyltransferase F.